The primary structure comprises 146 residues: Protein E6 (146 aa).

2 zinc fingers span residues C27–C63 and C100–C136.

It belongs to the papillomaviridae E6 protein family. Forms homodimers. Interacts with ubiquitin-protein ligase UBE3A/E6-AP; this interaction stimulates UBE3A ubiquitin activity. Interacts with host TP53 and EP300; this interaction inhibits TP53 activity.

It is found in the host cytoplasm. It localises to the host nucleus. In terms of biological role, plays a major role in the induction and maintenance of cellular transformation. E6 associates with host UBE3A/E6-AP ubiquitin-protein ligase and modulates its activity. Sequesters tumor suppressor TP53 in the host cytoplasm and modulates its activity by interacting with host EP300 that results in the reduction of TP53 acetylation and activation. In turn, apoptosis induced by DNA damage is inhibited. E6 also protects host keratinocytes from apoptosis by mediating the degradation of host BAK1. May also inhibit host immune response. The polypeptide is Protein E6 (Homo sapiens (Human)).